Here is a 279-residue protein sequence, read N- to C-terminus: Probable endonuclease 4 (279 aa).

Residues His-69, His-109, Glu-145, Asp-179, His-182, His-216, Asp-229, His-231, and Glu-261 each coordinate Zn(2+).

Belongs to the AP endonuclease 2 family. Requires Zn(2+) as cofactor.

The enzyme catalyses Endonucleolytic cleavage to 5'-phosphooligonucleotide end-products.. Its function is as follows. Endonuclease IV plays a role in DNA repair. It cleaves phosphodiester bonds at apurinic or apyrimidinic (AP) sites, generating a 3'-hydroxyl group and a 5'-terminal sugar phosphate. The chain is Probable endonuclease 4 from Chlorobium luteolum (strain DSM 273 / BCRC 81028 / 2530) (Pelodictyon luteolum).